Consider the following 476-residue polypeptide: tRNA(Ile)-lysidine synthase (476 aa).

30 to 35 (SGGPDS) lines the ATP pocket.

Belongs to the tRNA(Ile)-lysidine synthase family.

The protein resides in the cytoplasm. The enzyme catalyses cytidine(34) in tRNA(Ile2) + L-lysine + ATP = lysidine(34) in tRNA(Ile2) + AMP + diphosphate + H(+). In terms of biological role, ligates lysine onto the cytidine present at position 34 of the AUA codon-specific tRNA(Ile) that contains the anticodon CAU, in an ATP-dependent manner. Cytidine is converted to lysidine, thus changing the amino acid specificity of the tRNA from methionine to isoleucine. In Bacillus anthracis, this protein is tRNA(Ile)-lysidine synthase.